A 422-amino-acid chain; its full sequence is CRISPR-associated endodeoxyribonuclease Cas12f1 (422 aa).

Positions 1–126 (MIKVYRYEIV…PSYKRDIPLD (126 aa)) are recognition domain (REC). Residues 127–211 (LIKENISVNR…YLNISYDFEP (85 aa)) form a wedge domain (WED) region. Residues 212 to 220 (QTRVLDLNK) form a linker region. Residues 221–370 (IMGIDLGVAV…IKIDPQYTSQ (150 aa)) form a ruvC-I region. Active-site residues include Asp-225 and Glu-324. The target nucleic acid-binding (TNB) stretch occupies residues 371–399 (RCSECGNIDSGNRIGQAIFKCRACGYEAN). Positions 372, 375, 391, and 394 each coordinate Zn(2+). A ruvC-II region spans residues 400–420 (ADYNAARNIAIPNIDKIIAES). Asp-401 is an active-site residue.

The protein belongs to the CRISPR-associated endonuclease Cas12f family. An asymmetric homodimer. Guide RNA is probably required for dimerization. The cofactor is Mg(2+). Zn(2+) serves as cofactor.

In terms of biological role, CRISPR (clustered regularly interspaced short palindromic repeat), is an adaptive immune system that provides protection against mobile genetic elements (viruses, transposable elements and conjugative plasmids). CRISPR clusters contain sequences complementary to antecedent mobile elements and target invading nucleic acids. CRISPR clusters are transcribed and processed into CRISPR RNA (crRNA), which requires a trans-encoded small RNA (tracrRNA), but not this protein. Recognizes a short motif in the CRISPR repeat sequences (the 5' PAM or protospacer adjacent motif, YTT in this organism) to help distinguish self versus nonself, as targets within the CRISPR locus do not have PAMs. Has dsDNA endonuclease activity upon expression in E.coli of this protein, a mini CRISPR array and the probable tracrRNA. Plasmid cleavage is centered around positions 19-24 base pairs 3' of PAM. The mini system protects E.coli against transformation by foreign plasmids. The chain is CRISPR-associated endodeoxyribonuclease Cas12f1 from Sulfoacidibacillus thermotolerans (Acidibacillus sulfuroxidans).